The sequence spans 218 residues: Dehydration-responsive element-binding protein 1B (218 aa).

The tract at residues 1 to 26 (MEVEEAAYRTVWSEPPKRPAGRTKFR) is disordered. A DNA-binding region (AP2/ERF) is located at residues 32–95 (VYRGVRRRGG…RGRAACLNFA (64 aa)). The tract at residues 131-151 (SAAPSSPAETFANDGDEEEDN) is disordered.

Belongs to the AP2/ERF transcription factor family. ERF subfamily.

The protein localises to the nucleus. Its function is as follows. Transcriptional activator that binds specifically to the DNA sequence 5'-[AG]CCGAC-3'. Binding to the C-repeat/DRE element mediates high salinity- and dehydration-inducible transcription. Confers resistance to high salt, cold and drought stress. The chain is Dehydration-responsive element-binding protein 1B (DREB1B) from Oryza sativa subsp. japonica (Rice).